A 1042-amino-acid polypeptide reads, in one-letter code: Signal-induced proliferation-associated protein 1 (1042 aa).

Disordered stretches follow at residues 1-87 and 132-153; these read MPMW…TSTR and SQGM…EDQA. Position 64 is a phosphothreonine (T64). S67 is modified (phosphoserine). Residues 134–146 are compositionally biased toward polar residues; the sequence is GMGSHSEASSGTL. Phosphoserine occurs at positions 182, 304, and 314. In terms of domain architecture, Rap-GAP spans 321 to 539; sequence LLTLDEQVLS…RTRQQYLQDL (219 aa). Residues 687-763 enclose the PDZ domain; it reads ELALPRDGQG…VCVTVLPPDE (77 aa). Phosphoserine occurs at positions 817, 839, and 912. The tract at residues 830-903 is disordered; it reads EFLHSQNSLS…PAPELRASFL (74 aa). The segment covering 832-845 has biased composition (low complexity); the sequence is LHSQNSLSPRSSLS. A disordered region spans residues 946–980; that stretch reads LSREGQPIPESGDPKGTPKSDAEPEPGNLSEKVSH. Residues 957–967 are compositionally biased toward basic and acidic residues; it reads GDPKGTPKSDA. The stretch at 972 to 1034 forms a coiled coil; that stretch reads GNLSEKVSHL…TRLLLASKQL (63 aa).

Interacts with RRP1B; the interaction leads to inhibition of SIPA1 GTPase activity. In terms of tissue distribution, expressed in fetal as well as in adult tissues. Expressed abundantly in the lymphoid tissues such as thymus, spleen and peripheral blood lymphocytes and also shows a significant expression in the spinal cord.

It localises to the nucleus. The protein localises to the cytoplasm. Its subcellular location is the perinuclear region. It is found in the endomembrane system. GTPase activator for the nuclear Ras-related regulatory proteins Rap1 and Rap2 in vitro, converting them to the putatively inactive GDP-bound state. Affects cell cycle progression. The sequence is that of Signal-induced proliferation-associated protein 1 (SIPA1) from Homo sapiens (Human).